The following is a 221-amino-acid chain: MLARQQPRRVARELSLLSLSQLSRKDTKPETLEQGDLEALLLAATRTLSGEVHEILETASAELSRSHERLLNSEIRASNLNSAKAMLEEAMTLTETVINRLALAVDLPETLQLAGQMEVRKFALELIGTVCRRRQQIDEQLQEAMVDWQLSRLAKIDQDILRLAIAELDYLGVPQKVAINEAVELAKRYSGQDGHRFINGVLRRVTEKKTDGAPVTPGEPR.

This sequence belongs to the NusB family.

Involved in transcription antitermination. Required for transcription of ribosomal RNA (rRNA) genes. Binds specifically to the boxA antiterminator sequence of the ribosomal RNA (rrn) operons. The sequence is that of Transcription antitermination protein NusB from Synechocystis sp. (strain ATCC 27184 / PCC 6803 / Kazusa).